Here is a 174-residue protein sequence, read N- to C-terminus: Thioredoxin O, mitochondrial (174 aa).

The transit peptide at 1 to 59 directs the protein to the mitochondrion; it reads MALAHRLCRLPRLLPLAAAAAASKPYLPGKPSPAPPPPLSSPPPFPSLSRLFSTTPSSS. The region spanning 60 to 172 is the Thioredoxin domain; it reads GDSSMVVVGS…LESTMESLHK (113 aa). Active-site nucleophile residues include Cys96 and Cys99. The cysteines at positions 96 and 99 are disulfide-linked.

It belongs to the thioredoxin family. Plant O-type subfamily.

It localises to the mitochondrion. Probable thiol-disulfide oxidoreductase that may participate in various redox reactions. The chain is Thioredoxin O, mitochondrial from Oryza sativa subsp. japonica (Rice).